The sequence spans 101 residues: Chaperone modulatory protein CbpM (101 aa).

It belongs to the CbpM family.

Its function is as follows. Interacts with CbpA and inhibits both the DnaJ-like co-chaperone activity and the DNA binding activity of CbpA. Together with CbpA, modulates the activity of the DnaK chaperone system. Does not inhibit the co-chaperone activity of DnaJ. The chain is Chaperone modulatory protein CbpM from Pseudomonas putida (strain W619).